Here is a 521-residue protein sequence, read N- to C-terminus: Probable xyloglucan galactosyltransferase GT14 (521 aa).

Residues 1 to 30 (MRPKNYSQMEKPISITTGKFRTNNNNNHNN) are Cytoplasmic-facing. Residues 31 to 51 (VWFVVPLFFILCFVLLCFDYS) form a helical; Signal-anchor for type II membrane protein membrane-spanning segment. Residues 52 to 521 (ALFTDTDETA…SPYEEPQVLA (470 aa)) are Lumenal-facing. The tract at residues 72 to 92 (TSSEFTKDDNFSRFPDDPSPD) is disordered. The span at 76–87 (FTKDDNFSRFPD) shows a compositional bias: basic and acidic residues. Asparagine 81, asparagine 177, asparagine 203, asparagine 249, asparagine 265, and asparagine 411 each carry an N-linked (GlcNAc...) asparagine glycan. The tract at residues 492 to 521 (RQGKDGSDGFDDRDDYKYTFSPYEEPQVLA) is disordered.

The protein belongs to the glycosyltransferase 47 family. Expressed in roots, hypocotyls, cotyledons, leaves, stems, stamens and carpels.

The protein localises to the golgi apparatus membrane. Functions in xyloglucan synthesis by adding side chains to the xylosylated glucan backbone. Involved in the galactosylation of hemicellulose xyloglucan. In Arabidopsis thaliana (Mouse-ear cress), this protein is Probable xyloglucan galactosyltransferase GT14.